The sequence spans 61 residues: uncharacterized protein (61 aa).

This sequence belongs to the DUP/COS family.

This is an uncharacterized protein from Saccharomyces cerevisiae (strain ATCC 204508 / S288c) (Baker's yeast).